We begin with the raw amino-acid sequence, 991 residues long: Nonsense-mediated mRNA decay factor SMG8 (991 aa).

3 disordered regions span residues 18–41 (LGSE…PEPP), 100–129 (GEAG…NRAE), and 278–299 (EPPR…PKRR). Position 115 is a phosphoserine (S115). Residues 278–289 (EPPRSQDTAHPD) show a composition bias toward basic and acidic residues. Positions 290 to 299 (KPKKHSPKRR) are enriched in basic residues. 2 positions are modified to phosphoserine: S469 and S668. The disordered stretch occupies residues 653-738 (FEPSTPDPAP…KSEKRPNLVD (86 aa)). Residues 675–684 (DAEKLKEKEP) are compositionally biased toward basic and acidic residues. Polar residues predominate over residues 685 to 706 (QTQGESTSLSLALSLGQSTDSL). A compositionally biased stretch (basic and acidic residues) spans 720–736 (PEVHGQGEGKSEKRPNL). Phosphoserine occurs at positions 742 and 895. R898 bears the Omega-N-methylarginine mark.

The protein belongs to the SMG8 family. In terms of assembly, component of the SMG1C complex composed of SMG1, SMG8 and SMG9; the recruitment of SMG8 to SMG1 N-terminus induces a large conformational change in the SMG1 C-terminal head domain containing the catalytic domain. Forms heterodimers with SMG9; this assembly form may represent a SMG1C intermediate form. In terms of processing, phosphorylated by SMG1.

Involved in nonsense-mediated decay (NMD) of mRNAs containing premature stop codons. Is recruited by release factors to stalled ribosomes together with SMG1 and SMG9 (forming the SMG1C protein kinase complex) and, in the SMG1C complex, is required to mediate the recruitment of SMG1 to the ribosome:SURF complex and to suppress SMG1 kinase activity until the ribosome:SURF complex locates the exon junction complex (EJC). Acts as a regulator of kinase activity. In Mus musculus (Mouse), this protein is Nonsense-mediated mRNA decay factor SMG8 (Smg8).